A 147-amino-acid polypeptide reads, in one-letter code: Bis(5'-nucleosyl)-tetraphosphatase [asymmetrical] (147 aa).

Ala2 carries the N-acetylalanine modification. The region spanning 2-139 (ALRACGLIIF…EMKATLQEGH (138 aa)) is the Nudix hydrolase domain. The short motif at 43–64 (GHVDPGENDLETALRETQEETG) is the Nudix box element.

Belongs to the Nudix hydrolase family. A divalent metal cation is required as a cofactor.

The catalysed reaction is P(1),P(4)-bis(5'-guanosyl) tetraphosphate + H2O = GMP + GTP + 2 H(+). The enzyme catalyses a 5'-end CoA-ribonucleoside in mRNA + H2O = a 5'-end phospho-adenosine-phospho-ribonucleoside in mRNA + (R)-4'-phosphopantetheine + 2 H(+). It carries out the reaction a 5'-end FAD-phospho-ribonucleoside in mRNA + H2O = a 5'-end phospho-adenosine-phospho-ribonucleoside in mRNA + FMN + 2 H(+). In terms of biological role, catalyzes the asymmetric hydrolysis of diadenosine 5',5'''-P1,P4-tetraphosphate (Ap4A) to yield AMP and ATP. Exhibits decapping activity towards FAD-capped RNAs and dpCoA-capped RNAs in vitro. In Rattus norvegicus (Rat), this protein is Bis(5'-nucleosyl)-tetraphosphatase [asymmetrical] (Nudt2).